The primary structure comprises 375 residues: Quinolinate synthase (375 aa).

Residues His-47 and Ser-64 each contribute to the iminosuccinate site. Residue Cys-110 participates in [4Fe-4S] cluster binding. Residues 144–146 (YVN) and Ser-165 contribute to the iminosuccinate site. [4Fe-4S] cluster is bound at residue Cys-235. Residues 261-263 (HPE) and Thr-278 contribute to the iminosuccinate site. Residue Cys-325 coordinates [4Fe-4S] cluster.

Belongs to the quinolinate synthase family. Type 3 subfamily. [4Fe-4S] cluster serves as cofactor.

The protein resides in the cytoplasm. The enzyme catalyses iminosuccinate + dihydroxyacetone phosphate = quinolinate + phosphate + 2 H2O + H(+). It functions in the pathway cofactor biosynthesis; NAD(+) biosynthesis; quinolinate from iminoaspartate: step 1/1. Catalyzes the condensation of iminoaspartate with dihydroxyacetone phosphate to form quinolinate. This is Quinolinate synthase from Herpetosiphon aurantiacus (strain ATCC 23779 / DSM 785 / 114-95).